Here is a 121-residue protein sequence, read N- to C-terminus: Large ribosomal subunit protein bL12 (121 aa).

This sequence belongs to the bacterial ribosomal protein bL12 family. In terms of assembly, homodimer. Part of the ribosomal stalk of the 50S ribosomal subunit. Forms a multimeric L10(L12)X complex, where L10 forms an elongated spine to which 2 to 4 L12 dimers bind in a sequential fashion. Binds GTP-bound translation factors.

In terms of biological role, forms part of the ribosomal stalk which helps the ribosome interact with GTP-bound translation factors. Is thus essential for accurate translation. The sequence is that of Large ribosomal subunit protein bL12 from Lactobacillus delbrueckii subsp. bulgaricus (strain ATCC BAA-365 / Lb-18).